A 110-amino-acid chain; its full sequence is UPF0060 membrane protein Swit_0423 (110 aa).

4 helical membrane passes run 6–26 (LFIF…FWAW), 29–49 (LGKS…FAWL), 61–81 (AFAA…WAVE), and 90–110 (LIGV…PRTA).

The protein belongs to the UPF0060 family.

It localises to the cell inner membrane. This is UPF0060 membrane protein Swit_0423 from Rhizorhabdus wittichii (strain DSM 6014 / CCUG 31198 / JCM 15750 / NBRC 105917 / EY 4224 / RW1) (Sphingomonas wittichii).